The sequence spans 420 residues: Putative RNA-binding protein Alsin2 (420 aa).

A coiled-coil region spans residues isoleucine 99–alanine 130. Composition is skewed to basic and acidic residues over residues alanine 242 to glycine 259, arginine 282 to aspartate 363, and histidine 373 to aspartate 399. Residues alanine 242–arginine 420 are disordered.

It belongs to the Luc7 family. Interacts with x16 (via Arg/Ser-rich region).

Its function is as follows. May bind to RNA via its Arg/Ser-rich domain. The chain is Putative RNA-binding protein Alsin2 from Drosophila melanogaster (Fruit fly).